The following is a 425-amino-acid chain: tRNA(Met) cytidine acetate ligase (425 aa).

Residues valine 7–histidine 20, glycine 102, asparagine 162, and arginine 187–isoleucine 188 contribute to the ATP site.

Belongs to the TmcAL family.

The protein localises to the cytoplasm. The enzyme catalyses cytidine(34) in elongator tRNA(Met) + acetate + ATP = N(4)-acetylcytidine(34) in elongator tRNA(Met) + AMP + diphosphate. Its function is as follows. Catalyzes the formation of N(4)-acetylcytidine (ac(4)C) at the wobble position of elongator tRNA(Met), using acetate and ATP as substrates. First activates an acetate ion to form acetyladenylate (Ac-AMP) and then transfers the acetyl group to tRNA to form ac(4)C34. In Fervidobacterium nodosum (strain ATCC 35602 / DSM 5306 / Rt17-B1), this protein is tRNA(Met) cytidine acetate ligase.